The sequence spans 363 residues: NAD(P)H-quinone oxidoreductase subunit 1, chloroplastic (363 aa).

6 helical membrane-spanning segments follow: residues Leu-30–Leu-50, Ile-104–Leu-124, Leu-127–Met-147, Tyr-248–Ser-268, Val-300–Ile-320, and Phe-343–Leu-363.

The protein belongs to the complex I subunit 1 family. As to quaternary structure, NDH is composed of at least 16 different subunits, 5 of which are encoded in the nucleus.

It is found in the plastid. The protein localises to the chloroplast thylakoid membrane. It carries out the reaction a plastoquinone + NADH + (n+1) H(+)(in) = a plastoquinol + NAD(+) + n H(+)(out). It catalyses the reaction a plastoquinone + NADPH + (n+1) H(+)(in) = a plastoquinol + NADP(+) + n H(+)(out). In terms of biological role, NDH shuttles electrons from NAD(P)H:plastoquinone, via FMN and iron-sulfur (Fe-S) centers, to quinones in the photosynthetic chain and possibly in a chloroplast respiratory chain. The immediate electron acceptor for the enzyme in this species is believed to be plastoquinone. Couples the redox reaction to proton translocation, and thus conserves the redox energy in a proton gradient. The protein is NAD(P)H-quinone oxidoreductase subunit 1, chloroplastic of Lactuca sativa (Garden lettuce).